Reading from the N-terminus, the 438-residue chain is MKANAERIEKNTVLLEIEVDAEQLSQAMERAYRKLVKSVSVPGFRRGKTPRPIFERYVGKSALYEEAMDYLVPVAYFKAVEDTGIEPIEKPKVEVVQVEEGKPVLFKATVQVKPEVKLGQYKELELTRPSTEVSGEDVEKELVRLQNRYAKLVTLEEGTVEKGDTAIIDFAGRIDGEPIKGGEGRDYSLEIGSGSFVQGFEEQLVGMAAGETREIDVTFPENYKAEELAGKEAKFTVTVKEIKRKEIAPLDDDFAKDVSEFDTLEELRNDLSNKLKQAAENRAEYQVKMDAVTKAVDNAEVEIPEVMITNQLADMIGTLASRLSSQGLSLEDYLKYTGSTLEDMRASMMPEAERNVKTALVLEAIARAEGIKASDEEVDEEIKKMAAHYQQDPEVVRKMLEKEGQLKFIAEGLVREKTVKFLVENARILEDTNGQANE.

A PPIase FKBP-type domain is found at 163–248; that stretch reads GDTAIIDFAG…VKEIKRKEIA (86 aa).

This sequence belongs to the FKBP-type PPIase family. Tig subfamily.

It localises to the cytoplasm. The catalysed reaction is [protein]-peptidylproline (omega=180) = [protein]-peptidylproline (omega=0). Involved in protein export. Acts as a chaperone by maintaining the newly synthesized protein in an open conformation. Functions as a peptidyl-prolyl cis-trans isomerase. The chain is Trigger factor from Pelotomaculum thermopropionicum (strain DSM 13744 / JCM 10971 / SI).